A 363-amino-acid chain; its full sequence is Type-2 angiotensin II receptor (363 aa).

The Extracellular segment spans residues 1–45 (MKGNSTLATTSKNITSGLHFGLVNISGNNESTLNCSQKPSDKHLD). Residues asparagine 4, asparagine 13, asparagine 24, asparagine 29, and asparagine 34 are each glycosylated (N-linked (GlcNAc...) asparagine). 2 disulfides stabilise this stretch: cysteine 35–cysteine 290 and cysteine 117–cysteine 195. A helical membrane pass occupies residues 46–70 (AIPILYYIIFVIGFLVNIVVVTLFC). The Cytoplasmic portion of the chain corresponds to 71–80 (CQKGPKKVSS). A helical transmembrane segment spans residues 81–104 (IYIFNLAVADLLLLATLPLWATYY). The angiotensin II site is built by tyrosine 103 and tyrosine 104. At 105–114 (SYRYDWLFGP) the chain is on the extracellular side. Residues 115–140 (VMCKVFGSFLTLNMFASIFFITCMSV) traverse the membrane as a helical segment. Residues 141–159 (DRYQSVIYPFLSQRRNPWQ) lie on the Cytoplasmic side of the membrane. Residues 160 to 181 (ASYIVPLVWCMACLSSLPTFYF) form a helical membrane-spanning segment. Angiotensin II is bound by residues arginine 182, tyrosine 204, and lysine 215. The Extracellular portion of the chain corresponds to 182–206 (RDVRTIEYLGVNACIMAFPPEKYAQ). A helical transmembrane segment spans residues 207–232 (WSAGIALMKNILGFIIPLIFIATCYF). The Cytoplasmic segment spans residues 233 to 257 (GIRKHLLKTNSYGKNRITRDQVLKM). Residues 258–281 (AAAVVLAFIICWLPFHVLTFLDAL) traverse the membrane as a helical segment. Angiotensin II is bound at residue aspartate 279. Residues 282–294 (AWMGVINSCEVIA) are Extracellular-facing. A helical transmembrane segment spans residues 295 to 320 (VIDLALPFAILLGFTNSCVNPFLYCF). An angiotensin II-binding site is contributed by aspartate 297. At 321–363 (VGNRFQQKLRSVFRVPITWLQGKRESMSCRKSSSLREMETFVS) the chain is on the cytoplasmic side. The interval 324-333 (RFQQKLRSVF) is helix VIII.

This sequence belongs to the G-protein coupled receptor 1 family. In terms of assembly, interacts with MTUS1. As to expression, in adult, highly expressed in myometrium with lower levels in adrenal gland and fallopian tube. Expressed in the cerebellum. Very highly expressed in fetal kidney and intestine.

It is found in the cell membrane. Functionally, receptor for angiotensin II, a vasoconstricting peptide. Signals primarily via a non-canonical G-protein- and beta-arrestin independent pathways. Cooperates with MTUS1 to inhibit ERK2 activation and cell proliferation. The protein is Type-2 angiotensin II receptor of Homo sapiens (Human).